A 134-amino-acid polypeptide reads, in one-letter code: Small ribosomal subunit protein uS9 (134 aa).

The segment at 109-134 (DARRTEPHKPSKSTKGPRAKRQKSYR) is disordered. Residues 118–134 (PSKSTKGPRAKRQKSYR) are compositionally biased toward basic residues.

Belongs to the universal ribosomal protein uS9 family.

In Methanococcus aeolicus (strain ATCC BAA-1280 / DSM 17508 / OCM 812 / Nankai-3), this protein is Small ribosomal subunit protein uS9.